The chain runs to 53 residues: Small polypeptide DEVIL 7 (53 aa).

Residues 1-16 (MREKYTKEEAVKNWEK) show a composition bias toward basic and acidic residues. Positions 1-28 (MREKYTKEEAVKNWEKKKNKPSSPKGVG) are disordered. The required for DVL/RTFL small polypeptide activity stretch occupies residues 22–53 (SSPKGVGEFLKKKKGRFYIIGKCITMLLCSHK). The helical transmembrane segment at 30–46 (FLKKKKGRFYIIGKCIT) threads the bilayer.

This sequence belongs to the DVL/RTFL small polypeptides family.

Its subcellular location is the cell membrane. In terms of biological role, small polypeptide acting as a regulatory molecule which coordinates cellular responses required for differentiation, growth and development, probably by restricting polar cell proliferation in lateral organs and coordinating socket cell recruitment and differentiation at trichome sites. The chain is Small polypeptide DEVIL 7 from Arabidopsis thaliana (Mouse-ear cress).